Consider the following 236-residue polypeptide: Biosynthetic peptidoglycan transglycosylase (236 aa).

The helical transmembrane segment at 17 to 37 (IVILVALALLALPYLLTILYG) threads the bilayer.

Belongs to the glycosyltransferase 51 family.

Its subcellular location is the cell inner membrane. It carries out the reaction [GlcNAc-(1-&gt;4)-Mur2Ac(oyl-L-Ala-gamma-D-Glu-L-Lys-D-Ala-D-Ala)](n)-di-trans,octa-cis-undecaprenyl diphosphate + beta-D-GlcNAc-(1-&gt;4)-Mur2Ac(oyl-L-Ala-gamma-D-Glu-L-Lys-D-Ala-D-Ala)-di-trans,octa-cis-undecaprenyl diphosphate = [GlcNAc-(1-&gt;4)-Mur2Ac(oyl-L-Ala-gamma-D-Glu-L-Lys-D-Ala-D-Ala)](n+1)-di-trans,octa-cis-undecaprenyl diphosphate + di-trans,octa-cis-undecaprenyl diphosphate + H(+). Its pathway is cell wall biogenesis; peptidoglycan biosynthesis. Functionally, peptidoglycan polymerase that catalyzes glycan chain elongation from lipid-linked precursors. The chain is Biosynthetic peptidoglycan transglycosylase from Rhodopseudomonas palustris (strain ATCC BAA-98 / CGA009).